We begin with the raw amino-acid sequence, 205 residues long: GTP cyclohydrolase-2 (205 aa).

GTP is bound at residue 49–53; that stretch reads RVHSE. C54, C65, and C67 together coordinate Zn(2+). Residues Q70, 92 to 94, and T114 contribute to the GTP site; that span reads EGR. D126 acts as the Proton acceptor in catalysis. The active-site Nucleophile is the R128. GTP is bound by residues T149 and K154.

This sequence belongs to the GTP cyclohydrolase II family. It depends on Zn(2+) as a cofactor.

The catalysed reaction is GTP + 4 H2O = 2,5-diamino-6-hydroxy-4-(5-phosphoribosylamino)-pyrimidine + formate + 2 phosphate + 3 H(+). It participates in cofactor biosynthesis; riboflavin biosynthesis; 5-amino-6-(D-ribitylamino)uracil from GTP: step 1/4. Its function is as follows. Catalyzes the conversion of GTP to 2,5-diamino-6-ribosylamino-4(3H)-pyrimidinone 5'-phosphate (DARP), formate and pyrophosphate. The sequence is that of GTP cyclohydrolase-2 from Pseudomonas syringae pv. tomato (strain ATCC BAA-871 / DC3000).